Consider the following 308-residue polypeptide: Putative cathepsin L 3 (308 aa).

Positions 1–21 (MKQFLTAAIVTLLMTAGYYHL) are cleaved as a signal peptide. The propeptide at 22 to 110 (QEDDTNDFER…GASLPEVQLE (89 aa)) is activation peptide. Disulfide bonds link cysteine 129–cysteine 170 and cysteine 254–cysteine 298. Residues histidine 261 and asparagine 278 contribute to the active site.

It belongs to the peptidase C1 family.

It localises to the secreted. The enzyme catalyses Specificity close to that of papain. As compared to cathepsin B, cathepsin L exhibits higher activity toward protein substrates, but has little activity on Z-Arg-Arg-NHMec, and no peptidyl-dipeptidase activity.. Its function is as follows. May be involved in extracellular digestion. The polypeptide is Putative cathepsin L 3 (Paramecium tetraurelia).